The sequence spans 341 residues: S-adenosylmethionine:tRNA ribosyltransferase-isomerase (341 aa).

The protein belongs to the QueA family. Monomer.

It localises to the cytoplasm. It catalyses the reaction 7-aminomethyl-7-carbaguanosine(34) in tRNA + S-adenosyl-L-methionine = epoxyqueuosine(34) in tRNA + adenine + L-methionine + 2 H(+). It functions in the pathway tRNA modification; tRNA-queuosine biosynthesis. Functionally, transfers and isomerizes the ribose moiety from AdoMet to the 7-aminomethyl group of 7-deazaguanine (preQ1-tRNA) to give epoxyqueuosine (oQ-tRNA). The chain is S-adenosylmethionine:tRNA ribosyltransferase-isomerase from Chlorobium luteolum (strain DSM 273 / BCRC 81028 / 2530) (Pelodictyon luteolum).